Here is a 513-residue protein sequence, read N- to C-terminus: Bifunctional pantoate ligase/cytidylate kinase (513 aa).

The interval 1–282 (MGTFHRLTTT…VGQTRLIDNC (282 aa)) is pantoate--beta-alanine ligase. 32 to 39 (MGALHGGH) is an ATP binding site. The active-site Proton donor is the His-39. Residue Gln-63 coordinates (R)-pantoate. Gln-63 is a beta-alanine binding site. 152–155 (GQKD) provides a ligand contact to ATP. Gln-158 serves as a coordination point for (R)-pantoate. Residues Val-181 and 189-192 (LSSR) contribute to the ATP site. The tract at residues 283–513 (LLDRRRPILA…HLYRSRFPQP (231 aa)) is cytidylate kinase.

It in the N-terminal section; belongs to the pantothenate synthetase family. In the C-terminal section; belongs to the cytidylate kinase family. Type 1 subfamily.

The protein localises to the cytoplasm. The enzyme catalyses (R)-pantoate + beta-alanine + ATP = (R)-pantothenate + AMP + diphosphate + H(+). It catalyses the reaction CMP + ATP = CDP + ADP. It carries out the reaction dCMP + ATP = dCDP + ADP. It functions in the pathway cofactor biosynthesis; (R)-pantothenate biosynthesis; (R)-pantothenate from (R)-pantoate and beta-alanine: step 1/1. Functionally, catalyzes the condensation of pantoate with beta-alanine in an ATP-dependent reaction via a pantoyl-adenylate intermediate. In terms of biological role, catalyzes the transfer of a phosphate group from ATP to either CMP or dCMP to form CDP or dCDP and ADP, respectively. The chain is Bifunctional pantoate ligase/cytidylate kinase from Thermosynechococcus vestitus (strain NIES-2133 / IAM M-273 / BP-1).